The sequence spans 452 residues: Mitochondrial distribution and morphology protein 34 (452 aa).

Positions 1-196 (MSFRVKGWSD…LPSIIYKMSR (196 aa)) constitute an SMP-LTD domain.

It belongs to the MDM34 family. In terms of assembly, component of the ER-mitochondria encounter structure (ERMES) or MDM complex, composed of mmm1, mdm10, mdm12 and mdm34.

It localises to the mitochondrion outer membrane. Functionally, component of the ERMES/MDM complex, which serves as a molecular tether to connect the endoplasmic reticulum (ER) and mitochondria. Components of this complex are involved in the control of mitochondrial shape and protein biogenesis, and function in nonvesicular lipid trafficking between the ER and mitochondria. Mdm34 is required for the interaction of the ER-resident membrane protein mmm1 and the outer mitochondrial membrane-resident beta-barrel protein mdm10. In Schizosaccharomyces pombe (strain 972 / ATCC 24843) (Fission yeast), this protein is Mitochondrial distribution and morphology protein 34.